Reading from the N-terminus, the 388-residue chain is Paired box protein Pax-5 (388 aa).

A DNA-binding region (paired) is located at residues 15-141 (RHGGVNQLGG…SSINRIIRTK (127 aa)). The PAI subdomain stretch occupies residues 18–74 (GVNQLGGVFVNGRPLPDVVRQRIVELAHQGVRPCDISRQLRVSHGCVSKILGRYYET). The tract at residues 93-141 (KVVDKIADYKRQNPTMFAWEIRDRLLAERVCDNDTVPSVSSINRIIRTK) is RED subdomain. Positions 143-158 (QQPTNQQIPPSNHSIA) are enriched in polar residues. 2 disordered regions span residues 143–162 (QQPT…STGS) and 191–217 (AETN…PGRD).

First detected in mid-neurula embryos in the folding neural tube. With the completion of neurulation, expression becomes localized to the midbrain/hindbrain boundary (MHB) till at least stage 40. Expression is absent from regions adjacent to the MHB. In tailbuds, weakly and transiently expressed in the developing otic vesicle from stage 21 to stage 27.

The protein localises to the nucleus. Probable transcription factor. The protein is Paired box protein Pax-5 of Xenopus laevis (African clawed frog).